The primary structure comprises 101 residues: Alkene monooxygenase system, effector subunit (101 aa).

The protein belongs to the TmoD/XamoD family. Monomer. The alkene monooxygenase multicomponent enzyme system is composed of an electron transfer component and a monooxygenase component interacting with the effector protein XamoD. The electron transfer component is composed of a ferredoxin reductase (XamoF) and a ferredoxin (XamoC), and the monooxygenase component is formed by a heterohexamer (dimer of heterotrimers) of two alpha subunits (XamoA), two beta subunits (XamoE) and two gamma subunits (XamoB).

The protein localises to the cytoplasm. In terms of biological role, effector component of the alkene monooxygenase multicomponent enzyme system which catalyzes the O2- and NADH-dependent epoxidation of short chain (C2 to C6) alkenes to their corresponding epoxides. One possible role of this small protein might be to facilitate electron transfer between the reductase and ferredoxin components. The polypeptide is Alkene monooxygenase system, effector subunit (Xanthobacter autotrophicus (strain ATCC BAA-1158 / Py2)).